The following is a 320-amino-acid chain: Nicotianamine synthase 1 (320 aa).

This sequence belongs to the nicotianamine synthase (NAS)-like family. In shoots and roots.

The catalysed reaction is 3 S-adenosyl-L-methionine = nicotianamine + 3 S-methyl-5'-thioadenosine + 3 H(+). Its function is as follows. Synthesizes nicotianamine, a polyamine which serves as a sensor for the physiological iron status within the plant, and/or might be involved in the transport of iron. This is Nicotianamine synthase 1 (NAS1) from Arabidopsis thaliana (Mouse-ear cress).